The chain runs to 137 residues: Basic phospholipase A2 homolog APL-K49 (137 aa).

Residues 1-16 form the signal peptide; sequence MRTLWIVALLLVGVEG. Intrachain disulfides connect C42-C131, C44-C60, C59-C111, C65-C137, C66-C104, C73-C97, and C91-C102. An important for membrane-damaging activities in eukaryotes and bacteria; heparin-binding region spans residues 121–133; sequence KKYKAYFKLKCKK.

The protein belongs to the phospholipase A2 family. Group II subfamily. K49 sub-subfamily. In terms of assembly, monomer. In terms of tissue distribution, expressed by the venom gland.

It is found in the secreted. Functionally, snake venom phospholipase A2 (PLA2) that lacks enzymatic activity. Does not show antibacterial activity. Is myotoxic and displays edema-inducing activities. A model of myotoxic mechanism has been proposed: an apo Lys49-PLA2 is activated by the entrance of a hydrophobic molecule (e.g. fatty acid) at the hydrophobic channel of the protein leading to a reorientation of a monomer. This reorientation causes a transition between 'inactive' to 'active' states, causing alignment of C-terminal and membrane-docking sites (MDoS) side-by-side and putting the membrane-disruption sites (MDiS) in the same plane, exposed to solvent and in a symmetric position for both monomers. The MDoS region stabilizes the toxin on membrane by the interaction of charged residues with phospholipid head groups. Subsequently, the MDiS region destabilizes the membrane with penetration of hydrophobic residues. This insertion causes a disorganization of the membrane, allowing an uncontrolled influx of ions (i.e. calcium and sodium), and eventually triggering irreversible intracellular alterations and cell death. This Agkistrodon piscivorus leucostoma (Western cottonmouth) protein is Basic phospholipase A2 homolog APL-K49.